The sequence spans 1486 residues: Protein PRRC2B (1486 aa).

Disordered stretches follow at residues 1-20 (MSDR…KYST), 39-306 (VIPR…FPLP), 320-341 (QMND…PLRQ), 385-519 (KFSD…AREE), and 531-658 (LDQK…EQLY). Polar residues predominate over residues 88 to 137 (ANKQDQQDPKSSSVTASQPPESQPQPGLQKSVSNLQKPTQSISQENTNSV). Residues S166, S168, S222, and S226 each carry the phosphoserine modification. Residues 219 to 235 (SAASLSASPTELGSRNA) show a composition bias toward polar residues. T228 bears the Phosphothreonine mark. K251 participates in a covalent cross-link: Glycyl lysine isopeptide (Lys-Gly) (interchain with G-Cter in SUMO2). Over residues 288–300 (SPQSSENQTTVER) the composition is skewed to polar residues. S387 and S415 each carry phosphoserine. Basic and acidic residues-rich tracts occupy residues 422-433 (TDAKRTQEEGKD), 478-488 (HSAEDKEDKPP), and 501-519 (AVER…AREE). A Phosphoserine modification is found at S479. The stretch at 494–544 (IQSEMSEAVERARKRREEEERRAREERLAACAAKLKQLDQKCRQAQKANET) forms a coiled coil. The residue at position 555 (S555) is a Phosphoserine. The segment covering 600–611 (SNSSSSSSSSSS) has biased composition (low complexity). A Phosphoserine modification is found at S621. The segment covering 638 to 656 (QRQQQQQQQQQQQQQQQEQ) has biased composition (low complexity). Residue K751 forms a Glycyl lysine isopeptide (Lys-Gly) (interchain with G-Cter in SUMO2) linkage. A Phosphothreonine modification is found at T753. Phosphoserine is present on residues S762 and S793. Disordered regions lie at residues 792–847 (RSPD…EARK), 893–918 (EERR…IPPR), and 950–1080 (ALPV…PGAV). Residues 880 to 904 (IEVLTKKQRRLLEEERRKKEQAAQV) adopt a coiled-coil conformation. The span at 960 to 986 (SWRTAVTAFSSTEPGTSEQGFKSSQGD) shows a compositional bias: polar residues. Positions 998–1007 (SSATSSQRSS) are enriched in low complexity. 2 stretches are compositionally biased toward basic and acidic residues: residues 1025 to 1055 (SKAD…EHRP) and 1062 to 1074 (RSLK…EGAE). 2 positions are modified to phosphoserine: S1070 and S1159. Disordered stretches follow at residues 1177 to 1205 (KAWE…SSVG), 1410 to 1443 (QSIQ…TSRE), and 1455 to 1486 (ADSK…AWEP). A compositionally biased stretch (polar residues) spans 1181 to 1191 (NSPSLPEQSSP). The span at 1410-1421 (QSIQLPPGQSLS) shows a compositional bias: low complexity. The segment covering 1457-1474 (SKQNVPTGGSAPSPQAYR) has biased composition (polar residues).

This Mus musculus (Mouse) protein is Protein PRRC2B (Prrc2b).